Reading from the N-terminus, the 371-residue chain is Glycosyltransferase 8 domain-containing protein 1 (371 aa).

The Cytoplasmic portion of the chain corresponds to 1–7 (MSFRKVH). A helical; Signal-anchor for type II membrane protein transmembrane segment spans residues 8–28 (IAIILLAAVVFLLILHHNILG). Topologically, residues 29-371 (LTDILTRQSS…RRHGEADGTK (343 aa)) are lumenal. N-linked (GlcNAc...) asparagine glycosylation is found at Asn-104, Asn-249, and Asn-257.

This sequence belongs to the glycosyltransferase 8 family.

The protein resides in the membrane. The polypeptide is Glycosyltransferase 8 domain-containing protein 1 (glt8d1) (Xenopus tropicalis (Western clawed frog)).